The primary structure comprises 177 residues: Large ribosomal subunit protein uL6 (177 aa).

This sequence belongs to the universal ribosomal protein uL6 family. As to quaternary structure, part of the 50S ribosomal subunit.

Its function is as follows. This protein binds to the 23S rRNA, and is important in its secondary structure. It is located near the subunit interface in the base of the L7/L12 stalk, and near the tRNA binding site of the peptidyltransferase center. The sequence is that of Large ribosomal subunit protein uL6 from Pectobacterium carotovorum subsp. carotovorum (strain PC1).